A 570-amino-acid chain; its full sequence is MESVTTTIQCMGIKDSCNKKKIFQGGKSKIIEFQVKYENSDEVLNFQTTQSAINKLISELKKEIYSINLPISNYSVTSSSALQDINLLCQCISSTPKIQRSLSFVNFIETENNLTVSSTFIFDFIKNSDISGVLLKTKNNNKRTKKERLCVIKYSRVLYYFSETGGGSSTDINSTEVKKKRCKGLKFLDDCKITEKGENYFQLKTSNNETYVFTTPTNDECDRWVTTINNCIDYITKSTYRVSGQVQGTVVKSRNLAAKDLNGKSDPFVIIKAEQQQHRTQTIYKSLNPQFNEAFHFDITKHQGYVYFFVWDEDKFKTADFMGEVAVPLSLLPPNGSEISLWLPLSPRNSKDKVSGDILIKIRYFFSPDQIEVSPTSIYGNSLEAIVKNRPEICKNQVPNILYQFIEFFEQHLNEEGLFRICGNSTEIKFIKNQVNTDTQITFNPSSVHAYAGAFKLFFRELPEPLFTFNQYDNLINLAKKSTELQPLIEIIKTFPICHLNVLKLLLPFFGKIAANSKSNLMNHSNLSIVFGPSFLRVKDESHVNLMEMILVNDIAKFVFENSQQILKSI.

The PH domain occupies 127-233; the sequence is NSDISGVLLK…WVTTINNCID (107 aa). Positions 224-343 constitute a C2 domain; that stretch reads WVTTINNCID…PNGSEISLWL (120 aa). 5 residues coordinate Ca(2+): D260, D266, D312, D314, and D320. The 187-residue stretch at 381 to 567 folds into the Rho-GAP domain; that stretch reads NSLEAIVKNR…FVFENSQQIL (187 aa).

Ca(2+) serves as cofactor.

The protein localises to the cytoplasm. Its function is as follows. Rho GTPase-activating protein involved in the signal transduction pathway. This is Rho GTPase-activating protein gacEE (gacEE) from Dictyostelium discoideum (Social amoeba).